A 310-amino-acid polypeptide reads, in one-letter code: Retrotransposon Gag-like protein 4 (310 aa).

Residues 278-295 form a CCHC-type zinc finger; the sequence is QLCLYCSQSGHFTRDCLA.

Its function is as follows. Involved in cognitive function in the brain, possibly via the noradrenergic system. The chain is Retrotransposon Gag-like protein 4 from Homo sapiens (Human).